The primary structure comprises 157 residues: Immediate-early protein ICP-18 (157 aa).

This Frog virus 3 (isolate Goorha) (FV-3) protein is Immediate-early protein ICP-18.